A 1644-amino-acid chain; its full sequence is MAARRGRRDRVAPPPTGGPGPDPGGGVRGGSWASRSQAPYGTGGSVSAAEQVHEEGNDSSFVSLSRLGPSLREKDLEMEELILQDETLLETMQSYMDASLISLIEDFGESRLSLEDQNEMSLLTALTEILDNADSENLSPFDTIPDSELLVSPRESSSLHKLLNLSRTPPERDLITPIDPLGPSTGSSRVSGVEVPLADSPWDFSPPPFLETSSPKLPSWRPSRPRPRWGQSPPPQQRSDGEEEEEVAGFSGQMLAGKLDNSVNNVLDFPMHLACPEEEGTAEGADAPASAPGDESISSLSELVRAMHPYCLPNLTHLASLEGELEGQADADADELTLPEGCVVLEIVGQAATTGDDLEIPVVVRQIPSGSQSVLLDESLGSSPALQLLMPTMESETEAAVPEVAPCPDEELPLSSACLLEPREIMESLTPKEPQSLPASASQGSQKVPRKGRKKKNKEQPTACVEACTRRLRSSSRGQSTVSAEVNSQAGSSQKQPQEELQREAAALQSRGKPRAWARAWAAALEKTGSENLERSAGQDSPAEEDALDLCPKLLETSQANPTLSLNDSAQADSMPVDSVEGDSPAVGNAAPGDQASSGTELVGSLPVGPNLTSPVLADKKGIEPAVAIPTSDNLSPADVLANTVAADPVPNDPAPADPVLVKCRPTDPRRAAAAAAAAAQGSRPSLQSADHPKVVSPEGKDVVGPLKVEGSTSATTQEAKPRPLSLSEYRQRRQQRQTEAEDRNSQPPVVGKWPSLPETPTELADIPCLVPSAPARKTAPQRSPIAVPETVSVGSNPVSPTPEPSASKLMVSTHSEQVSSHEMPLAVRPPPPPLPSVSPAGPIPSTVPAPLPPFPPSVPPLLPLPSGGHGVPRLPPPPLQPPGLPVSMRQMPPDPYTQYAPVPPWSCYPSVSPPGYSCLPPPPTMPIVSGTPGTYAVPPTCNVPWVPPPAPVSPYSSSCAYGSLGWGPGLQQPPFWSTVSPPPLSSVPTGRAVPPTPVEPSGDPAGPPEDVLPGPVTPSLSSGPASPAAPPVEPTKPEAQPVPVSPQPKHKVSTLVQSPQIKAPPTLSTEGVVFEESVSERLKSETQENRPKEKPISTAIKSVPVPKQSAVAKLPAVHPARLRKLSFLPTPRAQGPEDVVQAFISEIGIEASDLSSLLEQFEKSEAKKECPLPASADSLAVGNSGIDIPQEKKPLDRLQAPELANVAGLTPPATPPHQLWKPLAAVSLLAKAKSPKSTAQEGTLKPEGITEAKPPATACLQEGAHSPSPVHVGSGDHDYCVRSRTPPKRMPALVISEVGSRWNVKRHQDITIKPVLSLGSAAPPLPCTATSQEPLDHRTSVEQADPSAPCFAPSTLLSPEASPCRSEMNARTPPEPSDKQQSMRCYRKACRSVSPSSRGWQGRRGRSSRSVSSGSSRTSEASSSSSVSSSSRSRSRSRSRSFSPPNKRWRRSSCSSSGRSRRCSSSSSSSSSSSSCSSRSRSPSVSPCRRSDRRRRYSSYRANDHYQRQRVLQKERAIEERRVVFIGKIPGRMTRSELKQRFSVFGEIEECTIHFRVQGDNYGFVTYRYAEEAFAAIESGHKLRQADEQPFDLCFGGRRQFCKRSYSDLDSNREDFDPAPVKSKFDSLDFDTLLKQAQKNLRR.

Disordered regions lie at residues 1-61 (MAAR…DSSF), 170-249 (PERD…EVAG), 429-616 (LTPK…TSPV), 646-761 (AADP…PETP), 773-884 (SAPA…QPPG), 978-1074 (STVS…EGVV), and 1322-1507 (AAPP…NDHY). Pro residues predominate over residues 12–22 (APPPTGGPGPD). A compositionally biased stretch (low complexity) spans 213 to 222 (SSPKLPSWRP). Ser-232 bears the Phosphoserine mark. A necessary for interaction with CREB1 and NRF1 and for transcriptional coactivation region spans residues 425 to 460 (IMESLTPKEPQSLPASASQGSQKVPRKGRKKKNKEQ). Residues 437–446 (LPASASQGSQ) show a composition bias toward polar residues. A compositionally biased stretch (basic residues) spans 448–457 (VPRKGRKKKN). A compositionally biased stretch (polar residues) spans 475-496 (SSRGQSTVSAEVNSQAGSSQKQ). The span at 515-524 (RAWARAWAAA) shows a compositional bias: low complexity. A Phosphoserine modification is found at Ser-541. Residues 556–572 (ETSQANPTLSLNDSAQA) show a composition bias toward polar residues. Residues 691–702 (DHPKVVSPEGKD) are compositionally biased toward basic and acidic residues. The segment covering 811 to 821 (MVSTHSEQVSS) has biased composition (polar residues). Pro residues-rich tracts occupy residues 828-864 (VRPPPPPLPSVSPAGPIPSTVPAPLPPFPPSVPPLLP) and 874-884 (RLPPPPLQPPG). 3 positions are modified to phosphoserine: Ser-1059, Ser-1393, and Ser-1395. Positions 1361-1432 (EASPCRSEMN…SSSSSVSSSS (72 aa)) are necessary for interaction with CREB1 and NRF1. Composition is skewed to low complexity over residues 1409–1433 (SRSVSSGSSRTSEASSSSSVSSSSR) and 1453–1489 (SSCSSSGRSRRCSSSSSSSSSSSSCSSRSRSPSVSPC). One can recognise an RRM domain in the interval 1523-1599 (RVVFIGKIPG…QPFDLCFGGR (77 aa)).

In terms of assembly, interacts with CREB1 and NRF1. Expressed in liver, heart, skeletal muscle, kidney and white and brown adipose tissues.

The protein resides in the nucleus. Its function is as follows. Acts as a coactivator during transcriptional activation of nuclear genes related to mitochondrial biogenesis and cell growth. Involved in the transcription coactivation of CREB and NRF1 target genes. The sequence is that of Peroxisome proliferator-activated receptor gamma coactivator-related protein 1 (Pprc1) from Mus musculus (Mouse).